Reading from the N-terminus, the 128-residue chain is 3-aminoacrylate deaminase RutC (128 aa).

This sequence belongs to the RutC family. Homotrimer.

It carries out the reaction (Z)-3-aminoacrylate + H2O + H(+) = 3-oxopropanoate + NH4(+). Involved in pyrimidine catabolism. Catalyzes the deamination of 3-aminoacrylate to malonic semialdehyde, a reaction that can also occur spontaneously. RutC may facilitate the reaction and modulate the metabolic fitness, rather than catalyzing essential functions. The chain is 3-aminoacrylate deaminase RutC from Escherichia coli O111:H- (strain 11128 / EHEC).